The primary structure comprises 536 residues: L-ornithine N(5)-monooxygenase SIDA (536 aa).

Residues 1–25 (MSPHRETTGDESTTTTVPQNGTNGA) are disordered. Residues 115 to 123 (EKQTRFAWH) and Gln134 each bind FAD. Residue Lys139 coordinates L-ornithine. Val200 is a binding site for FAD. An NADP(+)-binding site is contributed by Arg310. L-ornithine contacts are provided by residues 324–327 (NSIF) and Asn354. 515 to 517 (TLL) is a binding site for FAD. L-ornithine is bound at residue Ser518.

The protein belongs to the lysine N(6)-hydroxylase/L-ornithine N(5)-oxygenase family. As to quaternary structure, homotetramer. Requires FAD as cofactor.

It catalyses the reaction L-ornithine + NADH + O2 = N(5)-hydroxy-L-ornithine + NAD(+) + H2O. It carries out the reaction L-ornithine + NADPH + O2 = N(5)-hydroxy-L-ornithine + NADP(+) + H2O. The protein operates within siderophore biosynthesis. L-ornithine N(5)-monooxygenase; part of the gene cluster that mediates the biosynthesis of at least 11 siderophores, including beauverichelin A, dimerumic acid (DA), Na-dimethyl coprogen (NADC), eleutherazine B, ferricrocin (FC), fusarinine A, fusarinine C (FsC), metachelin A, mevalonolactone, rhodotorulic acid (RA) and tenellin. This cocktail of siderophores for iron metabolism is essential for virulence, and more specifically for the fungal virulence in penetrating through the host cuticle. Siderophore synthesis is also involved in conidial germination under iron-deficient conditions. SIDA initiates the biosynthesis of these siderophores with the enzymatic hydroxylation of ornithine. SIDA is indispensable for the production of most siderophores including fusarinine C and ferricrocin but not mevalonolactone and eleutherazine B. However, SIDA mediates the metabolic interplay between synthesis of mevalonolactone and eleutherazine B and other siderophores. The sequence is that of L-ornithine N(5)-monooxygenase SIDA from Beauveria bassiana (strain ARSEF 2860) (White muscardine disease fungus).